We begin with the raw amino-acid sequence, 151 residues long: Flagellar assembly factor FliW (151 aa).

This sequence belongs to the FliW family. As to quaternary structure, interacts with translational regulator CsrA and flagellin(s).

The protein resides in the cytoplasm. Functionally, acts as an anti-CsrA protein, binds CsrA and prevents it from repressing translation of its target genes, one of which is flagellin. Binds to flagellin and participates in the assembly of the flagellum. This Halalkalibacterium halodurans (strain ATCC BAA-125 / DSM 18197 / FERM 7344 / JCM 9153 / C-125) (Bacillus halodurans) protein is Flagellar assembly factor FliW.